Here is a 458-residue protein sequence, read N- to C-terminus: Cell division protein FtsZ (458 aa).

GTP-binding positions include 22–26 (GAGGN), 109–111 (GTG), E140, R144, and D188. The tract at residues 319–458 (KAEEEASKQP…IPFFKHRRQD (140 aa)) is disordered. A compositionally biased stretch (polar residues) spans 368–379 (NTISHEAPTQSI). Positions 401–418 (KQDRKENNRPQPVENKEK) are enriched in basic and acidic residues. The segment covering 425–439 (SFSSDDSTSISQIET) has biased composition (low complexity).

Belongs to the FtsZ family. As to quaternary structure, homodimer. Polymerizes to form a dynamic ring structure in a strictly GTP-dependent manner. Interacts directly with several other division proteins.

Its subcellular location is the cytoplasm. Functionally, essential cell division protein that forms a contractile ring structure (Z ring) at the future cell division site. The regulation of the ring assembly controls the timing and the location of cell division. One of the functions of the FtsZ ring is to recruit other cell division proteins to the septum to produce a new cell wall between the dividing cells. Binds GTP and shows GTPase activity. This Lactobacillus johnsonii (strain CNCM I-12250 / La1 / NCC 533) protein is Cell division protein FtsZ.